Consider the following 421-residue polypeptide: MQGQQKQNAGGGGGDNASPCIVLDGPIIVGAGPSGLAVAATLRQHGAPFTVVERSGGVADLWTNRTYDRLRLHLPKVFCELPHVAFPPDFPTYPTKHDFLRYLHSYAARFAIAPLLRRTVTRAWYDHPASLWRVTTTTTSSSATSVITEYASPWLVVASGENAEVVVPKVKGRERFAGEALHSSEYRSGERFRGMRVLVVGCGNSGMEMCLDLCEHGAMPFMSVRSGVHVLPREMFGASTFGIAMKLLRWLPIKMVDRFLLLVARMVLGDTEKYGLKRPKLGPLEIKNITGKSPVLDVGAWSLIKSGNIKIVPEVESFSGNGARFVDGNEMAFDAVIFATGYRSNVPSWLQEDGELFTEEGKLRSSGSSSEWRWRGPNGLYCVGFSGRGLLGAGADALRAAADIAGRWQETQQAAANISSV.

Residue 30–35 (GAGPSG) participates in FAD binding. 201-206 (GCGNSG) is a binding site for NADP(+).

This sequence belongs to the FMO family. It depends on FAD as a cofactor. In terms of tissue distribution, expressed in organs undergoing active growth and cell division.

It is found in the endoplasmic reticulum. The catalysed reaction is indole-3-pyruvate + NADPH + O2 + H(+) = (indol-3-yl)acetate + CO2 + NADP(+) + H2O. In terms of biological role, involved in auxin biosynthesis. Converts the indole-3-pyruvic acid (IPA) produced by the TAA family to indole-3-acetic acid (IAA). Seems not able to use tryptamine (TAM) as substrate. Probably responsible for auxin biosynthesis in leaves and involved in the regulation of lateral leaf growth. Required for maintaining water homeostasis and an appropriate root to shoot ratio. Required for the inhibition of root growth by ethylene in etiolated seedlings. Functions downstream of the ethylene-response transcription factor EIL1. This chain is Indole-3-pyruvate monooxygenase YUCCA8, found in Oryza sativa subsp. indica (Rice).